A 158-amino-acid polypeptide reads, in one-letter code: 2-C-methyl-D-erythritol 2,4-cyclodiphosphate synthase (158 aa).

The a divalent metal cation site is built by Asp8 and His10. 4-CDP-2-C-methyl-D-erythritol 2-phosphate contacts are provided by residues 8 to 10 and 34 to 35; these read DVH and HS. His42 is an a divalent metal cation binding site. 4-CDP-2-C-methyl-D-erythritol 2-phosphate-binding positions include 56 to 58, 61 to 65, 100 to 106, 132 to 135, and Phe139; these read DIG, FPDTD, AQKPKML, and TTEE.

Belongs to the IspF family. As to quaternary structure, homotrimer. Requires a divalent metal cation as cofactor.

The enzyme catalyses 4-CDP-2-C-methyl-D-erythritol 2-phosphate = 2-C-methyl-D-erythritol 2,4-cyclic diphosphate + CMP. Its pathway is isoprenoid biosynthesis; isopentenyl diphosphate biosynthesis via DXP pathway; isopentenyl diphosphate from 1-deoxy-D-xylulose 5-phosphate: step 4/6. Functionally, involved in the biosynthesis of isopentenyl diphosphate (IPP) and dimethylallyl diphosphate (DMAPP), two major building blocks of isoprenoid compounds. Catalyzes the conversion of 4-diphosphocytidyl-2-C-methyl-D-erythritol 2-phosphate (CDP-ME2P) to 2-C-methyl-D-erythritol 2,4-cyclodiphosphate (ME-CPP) with a corresponding release of cytidine 5-monophosphate (CMP). The protein is 2-C-methyl-D-erythritol 2,4-cyclodiphosphate synthase of Clostridium beijerinckii (strain ATCC 51743 / NCIMB 8052) (Clostridium acetobutylicum).